The primary structure comprises 139 residues: MGVFHVDIVSAEESIYSGPAEFLVAPAEGGEVGIYPQHTPMLTRIKPGSVRIKAPLKEEELVYVSGGMLEIQPDIVTILADTAVRGADLDEAKAIEAKKHAEEAVRDRASTLDYARAQAELSEAIAQLAAIQKLRKRGH.

Belongs to the ATPase epsilon chain family. As to quaternary structure, F-type ATPases have 2 components, CF(1) - the catalytic core - and CF(0) - the membrane proton channel. CF(1) has five subunits: alpha(3), beta(3), gamma(1), delta(1), epsilon(1). CF(0) has three main subunits: a, b and c.

The protein localises to the cell inner membrane. Produces ATP from ADP in the presence of a proton gradient across the membrane. The chain is ATP synthase epsilon chain from Nitrosospira multiformis (strain ATCC 25196 / NCIMB 11849 / C 71).